The sequence spans 242 residues: 1-(5-phosphoribosyl)-5-[(5-phosphoribosylamino)methylideneamino] imidazole-4-carboxamide isomerase (242 aa).

The active-site Proton acceptor is Asp8. Asp130 functions as the Proton donor in the catalytic mechanism.

It belongs to the HisA/HisF family.

It localises to the cytoplasm. It catalyses the reaction 1-(5-phospho-beta-D-ribosyl)-5-[(5-phospho-beta-D-ribosylamino)methylideneamino]imidazole-4-carboxamide = 5-[(5-phospho-1-deoxy-D-ribulos-1-ylimino)methylamino]-1-(5-phospho-beta-D-ribosyl)imidazole-4-carboxamide. Its pathway is amino-acid biosynthesis; L-histidine biosynthesis; L-histidine from 5-phospho-alpha-D-ribose 1-diphosphate: step 4/9. This Acidithiobacillus ferrooxidans (strain ATCC 53993 / BNL-5-31) (Leptospirillum ferrooxidans (ATCC 53993)) protein is 1-(5-phosphoribosyl)-5-[(5-phosphoribosylamino)methylideneamino] imidazole-4-carboxamide isomerase.